The following is a 234-amino-acid chain: MTIKKIISKNDPLISILSSPLRQDLATHFLFPRELLAKFPARKDTNPRKFCLLPLEGKNHLHNKHVSLYCLLSDRYLQPPSKRIFKRWNMELNNLNCPDIKRYILESLQDSLLKEISSLKETSTQNHLHCNDIKILQDCLRRPNISNGGIWVQWNLEEINQLKKFLSFRKLYPRQSFISLLQILPEPFLKSQLSHTLPVGSKYFFVPCDKKHHTLGLLLWKLFFLKDMPAAYSS.

It is found in the cytoplasm. The protein localises to the nucleus. This is Protein rgg8 (rgg8) from Schizosaccharomyces pombe (strain 972 / ATCC 24843) (Fission yeast).